We begin with the raw amino-acid sequence, 469 residues long: Keratin, type I cytoskeletal 16 (469 aa).

A disordered region spans residues 1–20 (MATCSRQFTSSSSMKGSCGI). The tract at residues 1–112 (MATCSRQFTS…GIGDGLLVGS (112 aa)) is head. The coil 1A stretch occupies residues 113 to 148 (EKVTMQNLNDRLATYLDKVRALEEANRDLEVKIRDW). The region spanning 113 to 424 (EKVTMQNLND…RLLDGENIHS (312 aa)) is the IF rod domain. Positions 149–166 (YQRQRPTEIKDYSPYFKT) are linker 1. Residues 167 to 258 (IEDLKSKIII…KNHEEEMLAL (92 aa)) form a coil 1B region. A linker 12 region spans residues 259–281 (RGQTGGDVNVEMDAAPGVDLSRI). A coil 2 region spans residues 282 to 420 (LNEMRDQYEQ…ATYRRLLDGE (139 aa)). The interval 421–469 (NIHSSSQHSSGQSYSSREVFSSSSRQPRSILKEQGSTSFSQSQSQSSRD) is tail. The disordered stretch occupies residues 422-469 (IHSSSQHSSGQSYSSREVFSSSSRQPRSILKEQGSTSFSQSQSQSSRD). Composition is skewed to low complexity over residues 423–444 (HSSS…SSSS) and 454–469 (QGST…SSRD).

Belongs to the intermediate filament family. As to quaternary structure, heterodimer of a type I and a type II keratin. KRT16 associates with KRT6 isomers (KRT6A or KRT6B). Interacts with TCHP. Interacts with TRADD. Expressed in the epithelia of the tongue, upper and lower palate, footpad, proximal nail fold and nail bed, penile spine, sweat gland ducts, and back epidermis (at protein level). Expressed in upper suprabasal layers of the corneal epithelium (at protein level). Expressed in internal stratified epithelia in the esophagus and vagina (at protein level). Expressed in transitional stratified squamous epithelia in the forestomach, anal canal, and nasal cavity (at protein level). Expressed in transitional epithelia of the ureter, bladder and urethra (at protein level). In mature hair follicles, expressed in the companion layer of the outer root sheath during anagen and in the club hair sheath during catagen and telogen (at protein level).

Epidermis-specific type I keratin that plays a key role in skin. Acts as a regulator of innate immunity in response to skin barrier breach: required for some inflammatory checkpoint for the skin barrier maintenance. In Mus musculus (Mouse), this protein is Keratin, type I cytoskeletal 16 (Krt16).